Reading from the N-terminus, the 130-residue chain is Large ribosomal subunit protein bL20 (130 aa).

It belongs to the bacterial ribosomal protein bL20 family.

Its function is as follows. Binds directly to 23S ribosomal RNA and is necessary for the in vitro assembly process of the 50S ribosomal subunit. It is not involved in the protein synthesizing functions of that subunit. This is Large ribosomal subunit protein bL20 from Nocardioides sp. (strain ATCC BAA-499 / JS614).